A 122-amino-acid chain; its full sequence is Probable DNA-directed RNA polymerase II subunit RPB11 (122 aa).

Belongs to the archaeal Rpo11/eukaryotic RPB11/RPC19 RNA polymerase subunit family. Component of the RNA polymerase II (Pol II) complex consisting of 12 subunits.

Its subcellular location is the nucleus. DNA-dependent RNA polymerase catalyzes the transcription of DNA into RNA using the four ribonucleoside triphosphates as substrates. Component of RNA polymerase II which synthesizes mRNA precursors and many functional non-coding RNAs. Pol II is the central component of the basal RNA polymerase II transcription machinery. It is composed of mobile elements that move relative to each other. RPB11 is part of the core element with the central large cleft. In Caenorhabditis briggsae, this protein is Probable DNA-directed RNA polymerase II subunit RPB11 (rpb-11).